The chain runs to 119 residues: Insulin growth factor-like family member 2 (119 aa).

A signal peptide spans 1–25 (MVPRIFAPAYVSVCLLLLCPREVIA).

Belongs to the IGFL family. As to expression, detected in cerebellum, heart, placenta, spleen, stomach, testis and thymus.

The protein resides in the secreted. In terms of biological role, potential ligand of the IGFLR1 cell membrane receptor. This Homo sapiens (Human) protein is Insulin growth factor-like family member 2 (IGFL2).